Consider the following 369-residue polypeptide: Protein FAM187B (369 aa).

A signal peptide spans 1-17; sequence MPPMLWLLLHFAAPALG. Topologically, residues 18 to 335 are extracellular; sequence FYFSISCPSG…RADSVLKGLK (318 aa). 3 N-linked (GlcNAc...) asparagine glycosylation sites follow: Asn-45, Asn-68, and Asn-130. The helical transmembrane segment at 336–356 threads the bilayer; sequence LVLLVVTVLALLGALLKCIHP. At 357–369 the chain is on the cytoplasmic side; the sequence is SPGRRSTQVLVVK.

The protein belongs to the FAM187 family.

The protein localises to the membrane. This Homo sapiens (Human) protein is Protein FAM187B (FAM187B).